We begin with the raw amino-acid sequence, 340 residues long: Glycerol-3-phosphate dehydrogenase [NAD(P)+] (340 aa).

4 residues coordinate NADPH: Ser14, Phe15, Arg35, and Lys108. Sn-glycerol 3-phosphate-binding residues include Lys108 and Gly136. Position 140 (Ala140) interacts with NADPH. Sn-glycerol 3-phosphate-binding residues include Lys191, Asp244, Ser254, Arg255, and Asn256. Lys191 functions as the Proton acceptor in the catalytic mechanism. Arg255 lines the NADPH pocket. NADPH-binding residues include Val279 and Glu281.

Belongs to the NAD-dependent glycerol-3-phosphate dehydrogenase family.

The protein resides in the cytoplasm. It carries out the reaction sn-glycerol 3-phosphate + NAD(+) = dihydroxyacetone phosphate + NADH + H(+). It catalyses the reaction sn-glycerol 3-phosphate + NADP(+) = dihydroxyacetone phosphate + NADPH + H(+). The protein operates within membrane lipid metabolism; glycerophospholipid metabolism. In terms of biological role, catalyzes the reduction of the glycolytic intermediate dihydroxyacetone phosphate (DHAP) to sn-glycerol 3-phosphate (G3P), the key precursor for phospholipid synthesis. This chain is Glycerol-3-phosphate dehydrogenase [NAD(P)+], found in Ectopseudomonas mendocina (strain ymp) (Pseudomonas mendocina).